A 456-amino-acid chain; its full sequence is SWI/SNF complex component SNF12 homolog (456 aa).

In terms of domain architecture, SWIB/MDM2 spans 234-310 (HVPQKYKVLG…PQLLREHLSP (77 aa)). The tract at residues 435–456 (KQTTPNPTPQQISMAPSTPQTP) is disordered.

Belongs to the SMARCD family. In terms of assembly, part of a SWI-SNF complex.

It localises to the nucleus. Involved in transcriptional activation and repression of select genes by chromatin remodeling (alteration of DNA-nucleosome topology). This is SWI/SNF complex component SNF12 homolog (snf12-1) from Dictyostelium discoideum (Social amoeba).